The following is an 876-amino-acid chain: MIERVKIENLRSHSSTEIEFREGINVLVGPNGAGKTTVLEAITLALFPRTFRSYDHMIREGERRAVVEVVFWGADGHKYKVRREFYRGGGQRNPRLYREEGDGWKVVASGRAEDVDREVMNALGGVDRDVFREAVYIRQGEIAKLVEATREERKRIVDRTLGLAEFKKAREQAHELLRVAEAKLETFRERVRDLKGSKKELKRVERELEELKREVKELEPEVEELKERLNELREAKREFERLEGELRLLENKIESLKGRRDDLRKLVEEGKEAERELQRLGDVPSKVRELENEEAELRRRIEELRNLLDDLRSLRNRLESAEEELEGVKRELEELKDEAGVDPERLVEFKDKIVEASERLRDLRREEELKRKLEKVSDELSELGDREETLQSEYEELQERLDEIQGELKEIRVKEKELLERIESLREAEGECPVCLRKLPRERAEKLLRDAEKELERLQGREEDLRKERRELKDRLESVRRELEGTKERMWRLRERREELERELEEIEELKEELADLSRELGVEEDRLPELRDLAVRAESLLRDLERRRGDVLRLEKELERTLDRCEKVIGRTPSGVEDVEEELRRLEEERDHVGQKLREAEGELERYHNLEEKVKRAREARKELKRIERDLEDAKGRLEQVERNLEGLRERYGSEDRLEEELESVEKKYERVRDKLSEVKGRLNGMEKRREELKKQVRKYREAKERKERLERVVEVLSLCKEVFRYSRDVAREKVLPAVEREASKILQDLSDRYGSLRIEDDGAVIRVSVPGGHFIEADRMSGGEKIIIGLALRLALAMVGSSFAPFIMLDEPTVHLDAEHRERLAQALRELDLGKGRVRQAIVVTHDEELEDAADELWRIENRAGESRVERYSG.

Residues Arg11, 31–37, and Gln139 each bind ATP; that span reads NGAGKTT. Coiled coils occupy residues 188 to 528 and 575 to 710; these read RERV…EDRL and SGVE…RKER. The 98-residue stretch at 387 to 484 folds into the Zinc-hook domain; the sequence is EETLQSEYEE…RLESVRRELE (98 aa). The Zn(2+) site is built by Cys432 and Cys435.

Belongs to the SMC family. RAD50 subfamily. In terms of assembly, homodimer. Forms a heterotetramer composed of two Mre11 subunits and two Rad50 subunits. Zn(2+) serves as cofactor.

Its function is as follows. Part of the Rad50/Mre11 complex, which is involved in the early steps of DNA double-strand break (DSB) repair. The complex may facilitate opening of the processed DNA ends to aid in the recruitment of HerA and NurA. Rad50 controls the balance between DNA end bridging and DNA resection via ATP-dependent structural rearrangements of the Rad50/Mre11 complex. This chain is DNA double-strand break repair Rad50 ATPase, found in Methanopyrus kandleri (strain AV19 / DSM 6324 / JCM 9639 / NBRC 100938).